We begin with the raw amino-acid sequence, 418 residues long: Glutamyl-tRNA(Gln) amidotransferase subunit D (418 aa).

An Asparaginase/glutaminase domain is found at 74-405 (KNISILSTGG…EDAKELMSKD (332 aa)). Residues threonine 84, threonine 160, aspartate 161, and lysine 237 contribute to the active site.

The protein belongs to the asparaginase 1 family. GatD subfamily. Heterodimer of GatD and GatE.

It carries out the reaction L-glutamyl-tRNA(Gln) + L-glutamine + ATP + H2O = L-glutaminyl-tRNA(Gln) + L-glutamate + ADP + phosphate + H(+). Its function is as follows. Allows the formation of correctly charged Gln-tRNA(Gln) through the transamidation of misacylated Glu-tRNA(Gln) in organisms which lack glutaminyl-tRNA synthetase. The reaction takes place in the presence of glutamine and ATP through an activated gamma-phospho-Glu-tRNA(Gln). The GatDE system is specific for glutamate and does not act on aspartate. The sequence is that of Glutamyl-tRNA(Gln) amidotransferase subunit D from Methanococcus maripaludis (strain C7 / ATCC BAA-1331).